Reading from the N-terminus, the 864-residue chain is Alanine--tRNA ligase (864 aa).

Residues His534, His538, Cys639, and His643 each contribute to the Zn(2+) site.

The protein belongs to the class-II aminoacyl-tRNA synthetase family. Requires Zn(2+) as cofactor.

Its subcellular location is the cytoplasm. The enzyme catalyses tRNA(Ala) + L-alanine + ATP = L-alanyl-tRNA(Ala) + AMP + diphosphate. In terms of biological role, catalyzes the attachment of alanine to tRNA(Ala) in a two-step reaction: alanine is first activated by ATP to form Ala-AMP and then transferred to the acceptor end of tRNA(Ala). Also edits incorrectly charged Ser-tRNA(Ala) and Gly-tRNA(Ala) via its editing domain. This chain is Alanine--tRNA ligase, found in Aster yellows witches'-broom phytoplasma (strain AYWB).